Here is a 757-residue protein sequence, read N- to C-terminus: Polyribonucleotide nucleotidyltransferase (757 aa).

Aspartate 525 and aspartate 531 together coordinate Mg(2+). The KH domain occupies 591-650; sequence PRVISVNIPVDKIGELIGPKGKTINAIQDETGADISIEEDGAVYIGAVDGPSAEAARAQV. In terms of domain architecture, S1 motif spans 662–734; the sequence is GESFLGTVVK…DRGKLSLAPV (73 aa). The segment at 736-757 is disordered; sequence EEAADQEGSAAASDGPEAPAEG.

It belongs to the polyribonucleotide nucleotidyltransferase family. The cofactor is Mg(2+).

It is found in the cytoplasm. It carries out the reaction RNA(n+1) + phosphate = RNA(n) + a ribonucleoside 5'-diphosphate. Functionally, involved in mRNA degradation. Catalyzes the phosphorolysis of single-stranded polyribonucleotides processively in the 3'- to 5'-direction. This chain is Polyribonucleotide nucleotidyltransferase, found in Clavibacter sepedonicus (Clavibacter michiganensis subsp. sepedonicus).